A 741-amino-acid chain; its full sequence is Condensin complex subunit 2 (741 aa).

The segment at methionine 1–arginine 67 is disordered. Phosphoserine is present on residues serine 15, serine 25, and serine 28. Threonine 49 is subject to Phosphothreonine. A phosphoserine mark is found at serine 70, serine 78, serine 81, serine 87, serine 89, serine 92, serine 96, serine 201, and serine 233. The span at cysteine 361 to aspartate 377 shows a compositional bias: acidic residues. The disordered stretch occupies residues cysteine 361–alanine 383. A Phosphoserine modification is found at serine 432. The disordered stretch occupies residues phenylalanine 447–lysine 467. Residue lysine 488 forms a Glycyl lysine isopeptide (Lys-Gly) (interchain with G-Cter in SUMO2) linkage. Residue serine 496 is modified to Phosphoserine. A phosphothreonine mark is found at threonine 598 and threonine 605. Lysine 637 bears the N6-acetyllysine mark.

Belongs to the CND2 (condensin subunit 2) family. In terms of assembly, component of the condensin complex, which contains the SMC2 and SMC4 heterodimer, and three non SMC subunits that probably regulate the complex: NCAPH/BRRN1, NCAPD2/CAPD2 and NCAPG. Phosphorylated by CDK1. Its phosphorylation, as well as that of NCAPD2 and NCAPG subunits, activates the condensin complex and is required for chromosome condensation. As to expression, widely expressed at low level. Expressed in proliferating cells.

The protein localises to the nucleus. It is found in the cytoplasm. Its subcellular location is the chromosome. In terms of biological role, regulatory subunit of the condensin complex, a complex required for conversion of interphase chromatin into mitotic-like condense chromosomes. The condensin complex probably introduces positive supercoils into relaxed DNA in the presence of type I topoisomerases and converts nicked DNA into positive knotted forms in the presence of type II topoisomerases. Early in neurogenesis, may play an essential role to ensure accurate mitotic chromosome condensation in neuron stem cells, ultimately affecting neuron pool and cortex size. The polypeptide is Condensin complex subunit 2 (Homo sapiens (Human)).